Consider the following 248-residue polypeptide: Probable transcriptional regulatory protein Msil_2305 (248 aa).

This sequence belongs to the TACO1 family.

Its subcellular location is the cytoplasm. The chain is Probable transcriptional regulatory protein Msil_2305 from Methylocella silvestris (strain DSM 15510 / CIP 108128 / LMG 27833 / NCIMB 13906 / BL2).